We begin with the raw amino-acid sequence, 199 residues long: MKKKPTLEFAKIVSGVFSNKEQALNNPKKFAHIQIHIRPLFFKTYNCFAFYSEQRYQHDIWNPYRQSINKLSQEEEIFIFSNYKIEDKERFTGGALDISLLDKISKYKLYKKPGCSMYFKETNPGNFLGTIESGCKCFIEYGSDKTYVKSKVTVNKNILISEDSGYAIETDKKVWGSEFGPLIFKKIINFDCFINEYWK.

Belongs to the CpcT/CpeT biliprotein lyase family.

Covalently attaches a chromophore to Cys residue(s) of phycobiliproteins. The sequence is that of Chromophore lyase CpcT/CpeT from Prochlorococcus marinus (strain NATL1A).